Here is a 1227-residue protein sequence, read N- to C-terminus: Pre-mRNA-splicing factor ATP-dependent RNA helicase PRP16 (1227 aa).

Glycine 2 bears the N-acetylglycine mark. Residue serine 56 is modified to Phosphoserine. The segment covering 60 to 89 has biased composition (basic and acidic residues); that stretch reads REREEKDDGEDKKKSKVSSYKDWEESKDDQ. The disordered stretch occupies residues 60-320; that stretch reads REREEKDDGE…ERQQWEDDQR (261 aa). Residue threonine 117 is modified to Phosphothreonine. Positions 128-201 are enriched in basic and acidic residues; the sequence is FWERSRQRER…SRRNEPESPR (74 aa). A phosphoserine mark is found at serine 199 and serine 224. Over residues 222–239 the composition is skewed to polar residues; sequence YGSSRRSQWESPSPTPSY. Residues 240–263 are compositionally biased toward basic and acidic residues; the sequence is RDSERSHRLSTRDRDRSVRGKYSD. Residue lysine 260 is modified to N6-acetyllysine. A compositionally biased stretch (acidic residues) spans 300 to 310; that stretch reads GEEGISFDTEE. Basic and acidic residues predominate over residues 311–320; sequence ERQQWEDDQR. Residues lysine 482, lysine 483, and lysine 504 each participate in a glycyl lysine isopeptide (Lys-Gly) (interchain with G-Cter in SUMO2) cross-link. Residues 542-705 form the Helicase ATP-binding domain; that stretch reads LTIIRDNSIV…FGNVPIFHIP (164 aa). 555-562 provides a ligand contact to ATP; the sequence is GETGSGKT. A DEAH box motif is present at residues 652–655; that stretch reads DEAH. The region spanning 727–902 is the Helicase C-terminal domain; that stretch reads AVKQSLQVHL…NVVLLLKSLG (176 aa). Positions 1155 to 1227 are disordered; it reads GKSRQENRRR…PRRTPARFGL (73 aa). 2 stretches are compositionally biased toward basic and acidic residues: residues 1157-1169 and 1181-1194; these read SRQE…KEEA and EQLR…EKRS. Lysine 1166 is covalently cross-linked (Glycyl lysine isopeptide (Lys-Gly) (interchain with G-Cter in SUMO2)). The residue at position 1194 (serine 1194) is a Phosphoserine.

This sequence belongs to the DEAD box helicase family. DEAH subfamily. PRP16 sub-subfamily. As to quaternary structure, identified in the spliceosome C complex.

The protein resides in the nucleus. The catalysed reaction is ATP + H2O = ADP + phosphate + H(+). Functionally, probable ATP-binding RNA helicase. Involved in pre-mRNA splicing as component of the spliceosome. The polypeptide is Pre-mRNA-splicing factor ATP-dependent RNA helicase PRP16 (DHX38) (Homo sapiens (Human)).